The sequence spans 388 residues: Chorismate synthase (388 aa).

2 residues coordinate NADP(+): Arg-39 and Arg-45. FMN contacts are provided by residues 130–132 (RSS), 251–252 (NA), Ala-296, 311–315 (KPIPT), and Arg-337.

The protein belongs to the chorismate synthase family. In terms of assembly, homotetramer. The cofactor is FMNH2.

It carries out the reaction 5-O-(1-carboxyvinyl)-3-phosphoshikimate = chorismate + phosphate. Its pathway is metabolic intermediate biosynthesis; chorismate biosynthesis; chorismate from D-erythrose 4-phosphate and phosphoenolpyruvate: step 7/7. Functionally, catalyzes the anti-1,4-elimination of the C-3 phosphate and the C-6 proR hydrogen from 5-enolpyruvylshikimate-3-phosphate (EPSP) to yield chorismate, which is the branch point compound that serves as the starting substrate for the three terminal pathways of aromatic amino acid biosynthesis. This reaction introduces a second double bond into the aromatic ring system. This is Chorismate synthase from Streptococcus equi subsp. zooepidemicus (strain H70).